The primary structure comprises 613 residues: Dihydroxy-acid dehydratase 3 (613 aa).

D81 contacts Mg(2+). Residue C122 participates in [2Fe-2S] cluster binding. Mg(2+)-binding residues include D123 and K124. The residue at position 124 (K124) is an N6-carboxylysine. C197 serves as a coordination point for [2Fe-2S] cluster. Residue E493 participates in Mg(2+) binding. The active-site Proton acceptor is S519.

The protein belongs to the IlvD/Edd family. As to quaternary structure, homodimer. Requires [2Fe-2S] cluster as cofactor. Mg(2+) serves as cofactor.

The catalysed reaction is (2R)-2,3-dihydroxy-3-methylbutanoate = 3-methyl-2-oxobutanoate + H2O. It catalyses the reaction (2R,3R)-2,3-dihydroxy-3-methylpentanoate = (S)-3-methyl-2-oxopentanoate + H2O. The protein operates within amino-acid biosynthesis; L-isoleucine biosynthesis; L-isoleucine from 2-oxobutanoate: step 3/4. It functions in the pathway amino-acid biosynthesis; L-valine biosynthesis; L-valine from pyruvate: step 3/4. Its function is as follows. Functions in the biosynthesis of branched-chain amino acids. Catalyzes the dehydration of (2R,3R)-2,3-dihydroxy-3-methylpentanoate (2,3-dihydroxy-3-methylvalerate) into 2-oxo-3-methylpentanoate (2-oxo-3-methylvalerate) and of (2R)-2,3-dihydroxy-3-methylbutanoate (2,3-dihydroxyisovalerate) into 2-oxo-3-methylbutanoate (2-oxoisovalerate), the penultimate precursor to L-isoleucine and L-valine, respectively. In Nocardia farcinica (strain IFM 10152), this protein is Dihydroxy-acid dehydratase 3.